The sequence spans 524 residues: MVPQALLLVPLLGFSLCFGKFPIYTIPTKLGPWSPIDIHHLSCPNNLVVEDEGCTNLSGFSYMELKVGRISAIKVNGFTCTGVVTEAETYTNFVGYVTTTFKRKHFRPMPGCMYSRVQLEDGRSPQIEESLHNPYPDYHWLRTVRTTKESLIIISPSVTDLDPYDKSLHSRVFPGRKCSGITVSSTYCSTNHDYTVWMPEILRLGTSCDIFTNSRGKRASKGSKTCGFVDERGLYKSLKGACKLKLCGVPGLRLMDGTWVAMQTSNETKWCPPGQLVNLHDLHSDEIEHLVVEELVKKREECLDALESITTTKSVSFRRLSHLRKLVPGFGKAYTIFNKTLMEAEAHYKSVRTWNEIIPSKGCLRVGGGCHPHVNGVFFNGIILGPDGHVLIPEMQSSLLQQHIELLESSVIPLMHPLADPFTVFKDGDEIEDFVEVHLPDVHEQVSGVDLGLPNWGEYVLLSAGTLIALMLIIFLITCCKRVDRPESTQRSLRGTGRNVSVTSQSGKFIPSRESYKSGGETGL.

Positions 1 to 19 (MVPQALLLVPLLGFSLCFG) are cleaved as a signal peptide. Topologically, residues 20 to 459 (KFPIYTIPTK…DLGLPNWGEY (440 aa)) are virion surface. Intrachain disulfides connect Cys-43–Cys-302, Cys-54–Cys-226, Cys-178–Cys-188, Cys-208–Cys-247, and Cys-242–Cys-271. Asn-56 is a glycosylation site (N-linked (GlcNAc...) asparagine; by host). Residues Asn-266 and Asn-338 are each glycosylated (N-linked (GlcNAc...) asparagine; by host). Cys-363 and Cys-370 are joined by a disulfide. The helical transmembrane segment at 460–480 (VLLSAGTLIALMLIIFLITCC) threads the bilayer. Cys-480 is lipidated: S-palmitoyl cysteine; by host. Residues 481-524 (KRVDRPESTQRSLRGTGRNVSVTSQSGKFIPSRESYKSGGETGL) lie on the Intravirion side of the membrane. The tract at residues 488–524 (STQRSLRGTGRNVSVTSQSGKFIPSRESYKSGGETGL) is disordered. The segment covering 489-507 (TQRSLRGTGRNVSVTSQSG) has biased composition (polar residues).

Belongs to the lyssavirus glycoprotein family. As to quaternary structure, homotrimer. Interacts with matrix protein. Interacts with host TRFC. Interacts with host BST2; this interaction inhibits viral budding by tethering new virions to the cell surface. Interacts with ITGB1. Interacts with host GRM2. In terms of processing, glycosylated and palmitoylated by host. Glycosylation is crucial for glycoprotein export at the cell surface.

The protein resides in the virion membrane. Attaches the virus to host cellular receptor, inducing endocytosis of the virion by using different host proteins including TFRC, GRM2 and ITGB1. In the endosome, the acidic pH induces conformational changes in the glycoprotein trimer, which trigger fusion between virus and cell membrane. There is convincing in vitro evidence that the muscular form of the nicotinic acetylcholine receptor (nAChR), the neuronal cell adhesion molecule (NCAM), and the p75 neurotrophin receptor (p75NTR) bind glycoprotein and thereby facilitate rabies virus entry into cells. This chain is Glycoprotein (G), found in Rabies virus (strain China/DRV) (RABV).